We begin with the raw amino-acid sequence, 342 residues long: Delta(6)-protoilludene synthase 8 (342 aa).

Aspartate 81 is a binding site for Mg(2+). The DDXXD motif signature appears at 93–97; that stretch reads RDMVD. Residues asparagine 217, serine 221, and glutamate 225 each contribute to the Mg(2+) site. The short motif at 217–225 is the NSE/DTE motif element; sequence NDLVSYNRE. The (2E,6E)-farnesyl diphosphate site is built by arginine 305 and tyrosine 306.

This sequence belongs to the terpene synthase family. Mg(2+) serves as cofactor.

It carries out the reaction (2E,6E)-farnesyl diphosphate = Delta(6)-protoilludene + diphosphate. Functionally, terpene cyclase that catalyzes the cyclization of farnesyl diphosphate (FPP) to delta(6)-protoilludene. The protein is Delta(6)-protoilludene synthase 8 of Postia placenta (strain ATCC 44394 / Madison 698-R) (Brown rot fungus).